Consider the following 550-residue polypeptide: 2-succinyl-5-enolpyruvyl-6-hydroxy-3-cyclohexene-1-carboxylate synthase (550 aa).

Belongs to the TPP enzyme family. MenD subfamily. Homodimer. The cofactor is Mg(2+). Mn(2+) is required as a cofactor. It depends on thiamine diphosphate as a cofactor.

The catalysed reaction is isochorismate + 2-oxoglutarate + H(+) = 5-enolpyruvoyl-6-hydroxy-2-succinyl-cyclohex-3-ene-1-carboxylate + CO2. The protein operates within quinol/quinone metabolism; 1,4-dihydroxy-2-naphthoate biosynthesis; 1,4-dihydroxy-2-naphthoate from chorismate: step 2/7. It participates in quinol/quinone metabolism; menaquinone biosynthesis. Functionally, catalyzes the thiamine diphosphate-dependent decarboxylation of 2-oxoglutarate and the subsequent addition of the resulting succinic semialdehyde-thiamine pyrophosphate anion to isochorismate to yield 2-succinyl-5-enolpyruvyl-6-hydroxy-3-cyclohexene-1-carboxylate (SEPHCHC). This Desulfitobacterium hafniense (strain DSM 10664 / DCB-2) protein is 2-succinyl-5-enolpyruvyl-6-hydroxy-3-cyclohexene-1-carboxylate synthase.